We begin with the raw amino-acid sequence, 374 residues long: tRNA-specific 2-thiouridylase MnmA (374 aa).

ATP is bound by residues 13–20 (GMSGGVDS) and M39. Residues 99 to 101 (NPD) are interaction with target base in tRNA. C104 acts as the Nucleophile in catalysis. Residues C104 and C201 are joined by a disulfide bond. Residue G128 coordinates ATP. Residues 151 to 153 (KDQ) form an interaction with tRNA region. Catalysis depends on C201, which acts as the Cysteine persulfide intermediate. Residues 313-314 (RY) are interaction with tRNA.

This sequence belongs to the MnmA/TRMU family.

It is found in the cytoplasm. The enzyme catalyses S-sulfanyl-L-cysteinyl-[protein] + uridine(34) in tRNA + AH2 + ATP = 2-thiouridine(34) in tRNA + L-cysteinyl-[protein] + A + AMP + diphosphate + H(+). Functionally, catalyzes the 2-thiolation of uridine at the wobble position (U34) of tRNA, leading to the formation of s(2)U34. This chain is tRNA-specific 2-thiouridylase MnmA, found in Streptococcus equi subsp. zooepidemicus (strain MGCS10565).